We begin with the raw amino-acid sequence, 330 residues long: Ketol-acid reductoisomerase (NADP(+)) (330 aa).

The KARI N-terminal Rossmann domain occupies 1–181; the sequence is MKVFYDSDFK…GLSRAGVIQT (181 aa). Residues 24–27, R47, S52, and 82–85 contribute to the NADP(+) site; these read YGSQ and DELQ. The active site involves H107. G133 is a binding site for NADP(+). In terms of domain architecture, KARI C-terminal knotted spans 182-327; sequence TFKEETETDL…AKLRKMCGLE (146 aa). D190, E194, E226, and E230 together coordinate Mg(2+). Substrate is bound at residue S251.

This sequence belongs to the ketol-acid reductoisomerase family. The cofactor is Mg(2+).

The catalysed reaction is (2R)-2,3-dihydroxy-3-methylbutanoate + NADP(+) = (2S)-2-acetolactate + NADPH + H(+). It carries out the reaction (2R,3R)-2,3-dihydroxy-3-methylpentanoate + NADP(+) = (S)-2-ethyl-2-hydroxy-3-oxobutanoate + NADPH + H(+). It participates in amino-acid biosynthesis; L-isoleucine biosynthesis; L-isoleucine from 2-oxobutanoate: step 2/4. The protein operates within amino-acid biosynthesis; L-valine biosynthesis; L-valine from pyruvate: step 2/4. Its function is as follows. Involved in the biosynthesis of branched-chain amino acids (BCAA). Catalyzes an alkyl-migration followed by a ketol-acid reduction of (S)-2-acetolactate (S2AL) to yield (R)-2,3-dihydroxy-isovalerate. In the isomerase reaction, S2AL is rearranged via a Mg-dependent methyl migration to produce 3-hydroxy-3-methyl-2-ketobutyrate (HMKB). In the reductase reaction, this 2-ketoacid undergoes a metal-dependent reduction by NADPH to yield (R)-2,3-dihydroxy-isovalerate. This is Ketol-acid reductoisomerase (NADP(+)) from Methanococcus maripaludis (strain C6 / ATCC BAA-1332).